A 476-amino-acid polypeptide reads, in one-letter code: Glycogen synthase (476 aa).

K15 contributes to the ADP-alpha-D-glucose binding site.

This sequence belongs to the glycosyltransferase 1 family. Bacterial/plant glycogen synthase subfamily.

It catalyses the reaction [(1-&gt;4)-alpha-D-glucosyl](n) + ADP-alpha-D-glucose = [(1-&gt;4)-alpha-D-glucosyl](n+1) + ADP + H(+). It participates in glycan biosynthesis; glycogen biosynthesis. Synthesizes alpha-1,4-glucan chains using ADP-glucose. This chain is Glycogen synthase, found in Yersinia pseudotuberculosis serotype IB (strain PB1/+).